An 855-amino-acid chain; its full sequence is Oxysterol-binding protein-related protein 3 (855 aa).

The interval 1 to 32 (MSDEKNLGVSQKLVSPSRSTSSCSSKQGSRQD) is disordered. A phosphoserine mark is found at S15 and S33. The span at 15 to 31 (SPSRSTSSCSSKQGSRQ) shows a compositional bias: low complexity. The region spanning 50–145 (PPVQKGFLLK…WVSKLRHHRM (96 aa)) is the PH domain. The short motif at 161–167 (FFSGSSV) is the FFAT 1 element. Phosphoserine occurs at positions 199, 250, 272, 277, 288, 291, 340, 393, 405, and 408. Positions 274–293 (PNLSTLDFGEEKSYSDGSEA) are disordered. Residues 377–396 (DPPAVPKPGDNLAEENSRDE) are disordered. The FFAT 2 signature appears at 450–454 (LSLDN). Positions 468-490 (PVLESSGEARSKRRTSLPAPGPN) are disordered.

Belongs to the OSBP family. As to quaternary structure, homodimer. Interacts with RRAS. Interacts (phosphorylated form) with VAPA. Interacts with OSBPL6. Post-translationally, phosphorylation is enhanced in vitro by phorbol-12-myristate-13-acetate (PMA), forskolin and calcium ionophore A23187. Phosphorylation seems to be stimulated in conditions of low cell-cell (or cell-matrix) adhesion. Expressed in spinal ganglia. Expressed in a subset of small lymphocytes (at protein level).

Its subcellular location is the endoplasmic reticulum membrane. It localises to the cytoplasm. The protein resides in the cytosol. The protein localises to the cell membrane. It is found in the cell projection. Its subcellular location is the filopodium tip. It localises to the nucleus membrane. Its function is as follows. Phosphoinositide-binding protein which associates with both cell and endoplasmic reticulum (ER) membranes. Can bind to the ER membrane protein VAPA and recruit VAPA to plasma membrane sites, thus linking these intracellular compartments. The ORP3-VAPA complex stimulates RRAS signaling which in turn attenuates integrin beta-1 (ITGB1) activation at the cell surface. With VAPA, may regulate ER morphology. Has a role in regulation of the actin cytoskeleton, cell polarity and cell adhesion. Binds to phosphoinositides with preference for PI(3,4)P2 and PI(3,4,5)P3. Also binds 25-hydroxycholesterol and cholesterol. In Mus musculus (Mouse), this protein is Oxysterol-binding protein-related protein 3 (Osbpl3).